We begin with the raw amino-acid sequence, 2599 residues long: Protein DOP1 homolog (2599 aa).

2 disordered regions span residues 532–571 (EQSG…SDSR) and 595–701 (ASNQ…LDEE). 3 stretches are compositionally biased toward polar residues: residues 534 to 549 (SGGS…NSAS), 595 to 604 (ASNQSVGRQS), and 625 to 636 (ASDTGQQSSSDL). The residue at position 753 (S753) is a Phosphoserine. Residues 1240–1251 (PRIEIPHKETPL) show a composition bias toward basic and acidic residues. Disordered stretches follow at residues 1240-1316 (PRIE…SSSA) and 1347-1368 (TYRL…EQKD). Positions 1264 to 1282 (QPSQEQPANQPDNSLQYDQ) are enriched in polar residues. The span at 1297 to 1309 (SELRETSIEKEDS) shows a compositional bias: basic and acidic residues. T1355 carries the phosphothreonine modification. S1360, S1363, and S1371 each carry phosphoserine. Positions 1409 to 1442 (CISKTSTDSNISGSHVEQPEQEEETEPGTESTIN) are disordered. Residues 1410–1423 (ISKTSTDSNISGSH) are compositionally biased toward polar residues. The residue at position 2525 (S2525) is a Phosphoserine.

It belongs to the DOP1 family.

The protein resides in the golgi apparatus membrane. Its function is as follows. May be involved in protein traffic between late Golgi and early endosomes. This Drosophila melanogaster (Fruit fly) protein is Protein DOP1 homolog.